The primary structure comprises 154 residues: SsrA-binding protein (154 aa).

It belongs to the SmpB family.

The protein resides in the cytoplasm. Functionally, required for rescue of stalled ribosomes mediated by trans-translation. Binds to transfer-messenger RNA (tmRNA), required for stable association of tmRNA with ribosomes. tmRNA and SmpB together mimic tRNA shape, replacing the anticodon stem-loop with SmpB. tmRNA is encoded by the ssrA gene; the 2 termini fold to resemble tRNA(Ala) and it encodes a 'tag peptide', a short internal open reading frame. During trans-translation Ala-aminoacylated tmRNA acts like a tRNA, entering the A-site of stalled ribosomes, displacing the stalled mRNA. The ribosome then switches to translate the ORF on the tmRNA; the nascent peptide is terminated with the 'tag peptide' encoded by the tmRNA and targeted for degradation. The ribosome is freed to recommence translation, which seems to be the essential function of trans-translation. This chain is SsrA-binding protein, found in Ruminiclostridium cellulolyticum (strain ATCC 35319 / DSM 5812 / JCM 6584 / H10) (Clostridium cellulolyticum).